A 695-amino-acid polypeptide reads, in one-letter code: MDRPDEGPPAKTRRLSSSESPQRDPPPPPPPPPLLRLPLPPPQQRPRLQEETEAAQVLADMRGVGLGPALPPPPPYVILEEGGVRAYFTLGAECPGWDSTIESGYGEAPPPTESLEALPTPEVSGGSLEIDFEVVQPSSFGGEGALETCSAVGWGPQRLIDPKSKEEAIIIVEDEDEDEQESMRSSRRRRRRRRRKQRKVKRESRQRNAERMESILQALEDIQLDLEAVNIKAGKAFLRLKRKFIQMRRPFLERRDLIIQHIPGFWVKAFLNHPRIPILINRRDEDIFRYLTNLQVQDLRHISMGYKMKLYFQTNPYFTNMVIVKEFQRNRSGRLVSHSTPIRWHRGQEPQARRHGNQDASHSFFSWFSNHSLPEADRIAEIIKNDLWVNPLRYYLRERGSRIKRKKQEMKKRKTRGRCEVVIMEDAPDYYAVEDIFSEISDIDETIHDIKISDFMETTDYFETTDNEITDINENICDSESPDHDEVRNETTDNNESADDNETTDNNESADDNNENPEDNNKNADDNKENPDNNKHTYGNNFFNGGFWGSHGNNQDSSDSDNEADEASDDEDNDGNEGDNEGSDDDGNEGDNEGSDDDDRDIEYYEKVIEDPFDRDQDDYEDVIEIISDESVEEEEGIVEGIEQDEDVYQEEGNYEGEGNEDVWEEGEDSDDSDLEDVLQVPNGWANPGKRGKTG.

The segment at 1 to 56 is disordered; it reads MDRPDEGPPAKTRRLSSSESPQRDPPPPPPPPPLLRLPLPPPQQRPRLQEETEAAQ. K11 is covalently cross-linked (Glycyl lysine isopeptide (Lys-Gly) (interchain with G-Cter in SUMO2)). 2 positions are modified to phosphoserine: S18 and S20. Over residues 23-44 the composition is skewed to pro residues; sequence RDPPPPPPPPPLLRLPLPPPQQ. Residues K163 and K165 each participate in a glycyl lysine isopeptide (Lys-Gly) (interchain with G-Cter in SUMO2) cross-link. Residues 175–207 form a disordered region; sequence EDEDEQESMRSSRRRRRRRRRKQRKVKRESRQR. Positions 185–202 are enriched in basic residues; it reads SSRRRRRRRRRKQRKVKR. T340 is modified (phosphothreonine). Disordered stretches follow at residues 471-603 and 632-695; these read DINE…RDIE and VEEE…GKTG. A compositionally biased stretch (basic and acidic residues) spans 481–491; that stretch reads SPDHDEVRNET. Residues 496-518 show a composition bias toward acidic residues; sequence ESADDNETTDNNESADDNNENPE. A compositionally biased stretch (basic and acidic residues) spans 519–535; it reads DNNKNADDNKENPDNNK. Over residues 539 to 557 the composition is skewed to low complexity; that stretch reads GNNFFNGGFWGSHGNNQDS. Acidic residues-rich tracts occupy residues 558-601 and 632-677; these read SDSD…DDRD and VEEE…DLED. 2 positions are modified to phosphoserine: S670 and S673.

Belongs to the nucleosome assembly protein (NAP) family. Interacts with histones. Interacts with CASK. Part of a complex containing CASK, TBR1 and TSPYL2. In terms of processing, phosphorylation at Ser-20 and/or Thr-340 impairs function on cell proliferation. Ubiquitously expressed, with highest levels in testis, adrenal gland, cerebral cortex, ovary, skeletal muscle and spleen. Present in testis, adrenal gland, cerebral cortex and ovary (at protein level).

Its subcellular location is the nucleus. It localises to the cytoplasm. In terms of biological role, part of the CASK/TBR1/TSPYL2 transcriptional complex which modulates gene expression in response to neuronal synaptic activity, probably by facilitating nucleosome assembly. May inhibit cell proliferation by inducing p53-dependent CDKN1A expression. The polypeptide is Testis-specific Y-encoded-like protein 2 (TSPYL2) (Macaca fascicularis (Crab-eating macaque)).